Consider the following 439-residue polypeptide: Cysteine--tRNA ligase (439 aa).

Position 26 (cysteine 26) interacts with Zn(2+). Positions 28-38 (PTVYNHVHIGN) match the 'HIGH' region motif. Residues cysteine 206, histidine 231, and glutamate 235 each coordinate Zn(2+). A 'KMSKS' region motif is present at residues 263–267 (KMSKS). Position 266 (lysine 266) interacts with ATP.

Belongs to the class-I aminoacyl-tRNA synthetase family. As to quaternary structure, monomer. Zn(2+) is required as a cofactor.

The protein localises to the cytoplasm. It catalyses the reaction tRNA(Cys) + L-cysteine + ATP = L-cysteinyl-tRNA(Cys) + AMP + diphosphate. The chain is Cysteine--tRNA ligase from Malacoplasma penetrans (strain HF-2) (Mycoplasma penetrans).